Reading from the N-terminus, the 294-residue chain is MRVQRVQIMGAGALGSLVGALIQLAGYDVIFVARGKQLEALKKGLRVSGLKNAELKVYCTSQPEDADITFVTVKAYDTETVAKKLAEVDAGVVCSLQNGVGNEEILAKYCRKVLGGVTTYGANLKDYGHVVYAGEGYTYVGEMDGRVSGEAEMVAEVLRDAGMRAEAVNDIEFRIWAKAVVNAAINPITAICRVKNGEVVRNPHLWEVARAVADEGRQVMARMGYEFDAASEVRKVAEMTAENRSSMLQDLERGKRTEVEFINGAIVKKGEEFGIDCAVNRTLLNLVRGVESGL.

Residues 10 to 15 (GAGALG), Arg34, Lys74, Asn98, and Ala122 contribute to the NADP(+) site. Lys178 (proton donor) is an active-site residue. Residues Lys178, Asn182, Asn186, Asn196, and 243 to 246 (NRSS) contribute to the substrate site. Position 258 (Glu258) interacts with NADP(+).

The protein belongs to the ketopantoate reductase family.

Its subcellular location is the cytoplasm. The catalysed reaction is (R)-pantoate + NAD(+) = 2-dehydropantoate + NADH + H(+). It carries out the reaction (R)-pantoate + NADP(+) = 2-dehydropantoate + NADPH + H(+). The protein operates within cofactor biosynthesis; coenzyme A biosynthesis. Its function is as follows. Catalyzes the NAD(P)H-dependent reduction of ketopantoate into pantoic acid. In Archaeoglobus fulgidus (strain ATCC 49558 / DSM 4304 / JCM 9628 / NBRC 100126 / VC-16), this protein is 2-dehydropantoate 2-reductase.